A 235-amino-acid chain; its full sequence is Segregation and condensation protein A (235 aa).

The protein belongs to the ScpA family. As to quaternary structure, component of a cohesin-like complex composed of ScpA, ScpB and the Smc homodimer, in which ScpA and ScpB bind to the head domain of Smc. The presence of the three proteins is required for the association of the complex with DNA.

Its subcellular location is the cytoplasm. Participates in chromosomal partition during cell division. May act via the formation of a condensin-like complex containing Smc and ScpB that pull DNA away from mid-cell into both cell halves. This Streptococcus equi subsp. zooepidemicus (strain MGCS10565) protein is Segregation and condensation protein A.